The chain runs to 354 residues: 4-hydroxy-3-methylbut-2-en-1-yl diphosphate synthase (flavodoxin) (354 aa).

Cys-263, Cys-266, Cys-298, and Glu-305 together coordinate [4Fe-4S] cluster.

This sequence belongs to the IspG family. [4Fe-4S] cluster is required as a cofactor.

It carries out the reaction (2E)-4-hydroxy-3-methylbut-2-enyl diphosphate + oxidized [flavodoxin] + H2O + 2 H(+) = 2-C-methyl-D-erythritol 2,4-cyclic diphosphate + reduced [flavodoxin]. Its pathway is isoprenoid biosynthesis; isopentenyl diphosphate biosynthesis via DXP pathway; isopentenyl diphosphate from 1-deoxy-D-xylulose 5-phosphate: step 5/6. Converts 2C-methyl-D-erythritol 2,4-cyclodiphosphate (ME-2,4cPP) into 1-hydroxy-2-methyl-2-(E)-butenyl 4-diphosphate. This is 4-hydroxy-3-methylbut-2-en-1-yl diphosphate synthase (flavodoxin) from Fusobacterium nucleatum subsp. nucleatum (strain ATCC 25586 / DSM 15643 / BCRC 10681 / CIP 101130 / JCM 8532 / KCTC 2640 / LMG 13131 / VPI 4355).